Reading from the N-terminus, the 150-residue chain is C-type lectin 16 (150 aa).

The first 27 residues, 1–27 (MKRVRVKVIFVSFGLLVVFLSLSGTAA), serve as a signal peptide directing secretion. 3 cysteine pairs are disulfide-bonded: C29–C40, C57–C146, and C123–C138. The C-type lectin domain maps to 36–147 (YEGHCYKPFN…CRMLARFVCE (112 aa)).

Belongs to the snaclec family. Heteromultimer; disulfide-linked. Expressed by the venom gland.

The protein localises to the secreted. In terms of biological role, interferes with one step of hemostasis (modulation of platelet aggregation, or coagulation cascade, for example). In Crotalus adamanteus (Eastern diamondback rattlesnake), this protein is C-type lectin 16.